A 381-amino-acid polypeptide reads, in one-letter code: RxLR effector protein 54 (381 aa).

Positions M1–A19 are cleaved as a signal peptide. The short motif at R57–R75 is the RxLR-dEER element. 5 WY-domain regions span residues S97 to G150, N151 to G198, N199 to N247, F251 to S299, and S302 to I354. The short motif at K372–V381 is the ATG8 interacting motif element.

Belongs to the RxLR effector family. As to quaternary structure, interacts via its C-terminal AIM with host ATG8CL.

The protein localises to the secreted. Its subcellular location is the host nucleus. It localises to the host cytoplasm. Its function is as follows. Effector that specifically binds host autophagy protein ATG8CL of the ATG8 family to stimulate autophagosome formation and subsequent autophagy rather than blocking autophagic flux. The pathogen remodels host-microbe interface by co-opting the host autophagy machinery which plays a key role in plant immunity. PexRD54 competes with the autophagy cargo receptor Joka2 to deplete it out of ATG8CL complexes and interferes with Joka2's positive effect on pathogen defense. The sequence is that of RxLR effector protein 54 from Phytophthora infestans (strain T30-4) (Potato late blight agent).